Consider the following 263-residue polypeptide: MTQTNQAPLVIKLGGAALSCTQTLSQLFGAIAAYQKSAQRQIAIVHGGGYLVDELMAKLQLKTVKKHGLRVTPYDQIPVIAGALAGTANKLLQGQAIADGLNAVGLSLADGGLCHVEELDPELGAVGKATPGDSSLLQAILNTGALPIISSIGLTAEGQMMNVNADQAAVAVAGALDAELVLLSDVSGVLDGKGHLLKSLSKKEANALIEGQVITDGMIVKVKAALEAANDLGRPIEVATWRYPEKLTQLFAGESIGTQFLPQ.

Substrate is bound by residues 48 to 49, arginine 70, and asparagine 162; that span reads GG.

This sequence belongs to the acetylglutamate kinase family. ArgB subfamily.

The protein localises to the cytoplasm. The enzyme catalyses N-acetyl-L-glutamate + ATP = N-acetyl-L-glutamyl 5-phosphate + ADP. Its pathway is amino-acid biosynthesis; L-arginine biosynthesis; N(2)-acetyl-L-ornithine from L-glutamate: step 2/4. Functionally, catalyzes the ATP-dependent phosphorylation of N-acetyl-L-glutamate. The protein is Acetylglutamate kinase of Vibrio parahaemolyticus serotype O3:K6 (strain RIMD 2210633).